Reading from the N-terminus, the 696-residue chain is Polyribonucleotide nucleotidyltransferase (696 aa).

Residues Asp486 and Asp492 each contribute to the Mg(2+) site. In terms of domain architecture, KH spans 553 to 612; it reads PRITQKQIPKDRIGELIGPGGKMIRAIIEQSGSEISVDDSGKVTIASPSEESKEKAIAMI. The S1 motif domain occupies 622–690; sequence GKIYDGVIKR…KMGKIDLSRK (69 aa).

This sequence belongs to the polyribonucleotide nucleotidyltransferase family. Requires Mg(2+) as cofactor.

It localises to the cytoplasm. The catalysed reaction is RNA(n+1) + phosphate = RNA(n) + a ribonucleoside 5'-diphosphate. Involved in mRNA degradation. Catalyzes the phosphorolysis of single-stranded polyribonucleotides processively in the 3'- to 5'-direction. The protein is Polyribonucleotide nucleotidyltransferase of Leptospira biflexa serovar Patoc (strain Patoc 1 / ATCC 23582 / Paris).